A 135-amino-acid chain; its full sequence is Beta-galactoside-binding lectin (135 aa).

Position 2 is an N-acetylserine (serine 2). Cysteine 3 and cysteine 8 are joined by a disulfide. The Galectin domain occupies 5 to 135; sequence GPVCTNLGLK…DFTLRSVSWE (131 aa). Residues 46–50, histidine 54, asparagine 63, 70–73, and 70–76 contribute to the a beta-D-galactoside site; these read HFNPR, WGTE, and WGTEQRE.

In terms of assembly, homodimer; disulfide-linked. As to quaternary structure, (Microbial infection) Interacts with newcastle disease virus protein HN; this interaction inhibits viral adsorption rather than internalization. Mainly in the intestine (adult), mainly in the skin (embryo).

Functionally, this protein binds beta-galactoside. May participate in host antiviral defense through specific interaction with glycans on the viral envelope glycoproteins. The polypeptide is Beta-galactoside-binding lectin (CG-1B) (Gallus gallus (Chicken)).